The sequence spans 356 residues: UDP-N-acetylglucosamine--N-acetylmuramyl-(pentapeptide) pyrophosphoryl-undecaprenol N-acetylglucosamine transferase (356 aa).

Residues 12-14 (TGG), asparagine 124, arginine 163, serine 188, isoleucine 242, and glutamine 287 contribute to the UDP-N-acetyl-alpha-D-glucosamine site.

The protein belongs to the glycosyltransferase 28 family. MurG subfamily.

The protein localises to the cell inner membrane. It catalyses the reaction di-trans,octa-cis-undecaprenyl diphospho-N-acetyl-alpha-D-muramoyl-L-alanyl-D-glutamyl-meso-2,6-diaminopimeloyl-D-alanyl-D-alanine + UDP-N-acetyl-alpha-D-glucosamine = di-trans,octa-cis-undecaprenyl diphospho-[N-acetyl-alpha-D-glucosaminyl-(1-&gt;4)]-N-acetyl-alpha-D-muramoyl-L-alanyl-D-glutamyl-meso-2,6-diaminopimeloyl-D-alanyl-D-alanine + UDP + H(+). Its pathway is cell wall biogenesis; peptidoglycan biosynthesis. Functionally, cell wall formation. Catalyzes the transfer of a GlcNAc subunit on undecaprenyl-pyrophosphoryl-MurNAc-pentapeptide (lipid intermediate I) to form undecaprenyl-pyrophosphoryl-MurNAc-(pentapeptide)GlcNAc (lipid intermediate II). The polypeptide is UDP-N-acetylglucosamine--N-acetylmuramyl-(pentapeptide) pyrophosphoryl-undecaprenol N-acetylglucosamine transferase (Pseudomonas fluorescens (strain Pf0-1)).